The primary structure comprises 89 residues: Small ribosomal subunit protein uS15 (89 aa).

Belongs to the universal ribosomal protein uS15 family. As to quaternary structure, part of the 30S ribosomal subunit. Forms a bridge to the 50S subunit in the 70S ribosome, contacting the 23S rRNA.

One of the primary rRNA binding proteins, it binds directly to 16S rRNA where it helps nucleate assembly of the platform of the 30S subunit by binding and bridging several RNA helices of the 16S rRNA. Its function is as follows. Forms an intersubunit bridge (bridge B4) with the 23S rRNA of the 50S subunit in the ribosome. The chain is Small ribosomal subunit protein uS15 from Syntrophomonas wolfei subsp. wolfei (strain DSM 2245B / Goettingen).